The following is a 106-amino-acid chain: Malonate decarboxylase acyl carrier protein (106 aa).

At Ser-28 the chain carries O-(phosphoribosyl dephospho-coenzyme A)serine.

Belongs to the MdcC family. Post-translationally, covalently binds the prosthetic group of malonate decarboxylase.

The protein localises to the cytoplasm. In terms of biological role, subunit of malonate decarboxylase, it is an acyl carrier protein to which acetyl and malonyl thioester residues are bound via a 2'-(5''-phosphoribosyl)-3'-dephospho-CoA prosthetic group and turn over during the catalytic mechanism. In Stenotrophomonas maltophilia (strain K279a), this protein is Malonate decarboxylase acyl carrier protein.